Consider the following 284-residue polypeptide: Transcription factor lir-3 (284 aa).

A compositionally biased stretch (basic and acidic residues) spans 50 to 60 (EPRISRDELRE). The interval 50 to 71 (EPRISRDELRETASSPVTFETR) is disordered. Residues 224 to 247 (YKCKQCDYLDYRKSTMRKHTVSQH) form a C2H2-type zinc finger.

As to expression, expressed in FLP neurons.

The protein localises to the nucleus. Its function is as follows. Positively regulates the RNA polymerase III-associated transcription of small non-coding RNAs. This is Transcription factor lir-3 from Caenorhabditis elegans.